The primary structure comprises 87 residues: COMM domain-containing protein 6 (87 aa).

Met-1 is subject to N-acetylmethionine. Residues 20-87 (QLIDFQWKLG…KEIAAVIETV (68 aa)) form the COMM domain.

Belongs to the COMM domain-containing protein 6 family. Component of the commander complex consisting of the CCC subcomplex and the retriever subcomplex. Component of the CCC (COMMD/CCDC22/CCDC93) subcomplex consisting of COMMD1, COMMD2, COMMD3, COMMD4, COMMD5, COMMD6, COMMD7, COMMD8, COMMD9, COMMD10, CCDC22 and CCDC93; within the complex forms a heterodimer with COMMD1. May form a homodimer with isoform 1. Interacts with RELA, RELB, NFKB1/p105. Does not interact with NFKBIB. Interacts with CCDC22, CCDC93, SCNN1B, CUL4A.

Its subcellular location is the nucleus. The protein localises to the cytoplasm. Scaffold protein in the commander complex that is essential for endosomal recycling of transmembrane cargos; the commander complex is composed of the CCC subcomplex and the retriever subcomplex. May modulate activity of cullin-RING E3 ubiquitin ligase (CRL) complexes. Down-regulates activation of NF-kappa-B. Inhibits TNF-induced NFKB1 activation. The protein is COMM domain-containing protein 6 (Commd6) of Mus musculus (Mouse).